Reading from the N-terminus, the 234-residue chain is Accessory gland protein Acp29AB (234 aa).

A signal peptide spans 1–21 (MYATNLLYLLALWNLWLVSGG). Residues N29, N61, N127, and N164 are each glycosylated (N-linked (GlcNAc...) asparagine). Positions 137 to 234 (VTCREMNGHL…SFVCQANQWA (98 aa)) constitute a C-type lectin domain. Intrachain disulfides connect C139–C228 and C207–C220.

It localises to the secreted. Its function is as follows. Responsible for physiological and behavioral changes in mated female flies. The protein is Accessory gland protein Acp29AB (Acp29AB) of Drosophila simulans (Fruit fly).